Reading from the N-terminus, the 229-residue chain is ABC transporter I family member 1 (229 aa).

The region spanning leucine 11 to isoleucine 228 is the ABC transporter domain. ATP is bound at residue glycine 43–serine 50.

The protein belongs to the ABC transporter superfamily. ABCI family.

The protein localises to the membrane. It catalyses the reaction heme b(in) + ATP + H2O = heme b(out) + ADP + phosphate + H(+). Its function is as follows. Part of the ABC transporter complex CcmAB involved in the biogenesis of c-type cytochromes; once thought to export heme, this seems not to be the case, but its exact role is uncertain. Responsible for energy coupling to the transport system. This Arabidopsis thaliana (Mouse-ear cress) protein is ABC transporter I family member 1 (ABCI1).